Consider the following 429-residue polypeptide: DNA primase DnaG (429 aa).

One can recognise a Toprim domain in the interval Asp-172 to Pro-246. The Mg(2+) site is built by Glu-178, Asp-220, and Asp-222. Positions Arg-287 to Glu-322 are disordered.

Belongs to the archaeal DnaG primase family. As to quaternary structure, forms a ternary complex with MCM helicase and DNA. Component of the archaeal exosome complex. Requires Mg(2+) as cofactor.

It catalyses the reaction ssDNA + n NTP = ssDNA/pppN(pN)n-1 hybrid + (n-1) diphosphate.. Its function is as follows. RNA polymerase that catalyzes the synthesis of short RNA molecules used as primers for DNA polymerase during DNA replication. Also part of the exosome, which is a complex involved in RNA degradation. Acts as a poly(A)-binding protein that enhances the interaction between heteromeric, adenine-rich transcripts and the exosome. The chain is DNA primase DnaG from Picrophilus torridus (strain ATCC 700027 / DSM 9790 / JCM 10055 / NBRC 100828 / KAW 2/3).